Here is a 350-residue protein sequence, read N- to C-terminus: Dihydroorotate dehydrogenase (quinone) (350 aa).

FMN is bound by residues 65–69 and Thr-89; that span reads AGLDK. Lys-69 lines the substrate pocket. Residue 114-118 coordinates substrate; it reads NRLGF. 2 residues coordinate FMN: Asn-149 and Asn-182. Asn-182 is a binding site for substrate. The active-site Nucleophile is Ser-185. Asn-187 is a substrate binding site. Positions 227 and 255 each coordinate FMN. Residue 256–257 participates in substrate binding; it reads NT. FMN is bound by residues Gly-278, Gly-307, and 328–329; that span reads YT.

Belongs to the dihydroorotate dehydrogenase family. Type 2 subfamily. In terms of assembly, monomer. Requires FMN as cofactor.

The protein localises to the cell membrane. The catalysed reaction is (S)-dihydroorotate + a quinone = orotate + a quinol. It functions in the pathway pyrimidine metabolism; UMP biosynthesis via de novo pathway; orotate from (S)-dihydroorotate (quinone route): step 1/1. Functionally, catalyzes the conversion of dihydroorotate to orotate with quinone as electron acceptor. The protein is Dihydroorotate dehydrogenase (quinone) of Polaromonas naphthalenivorans (strain CJ2).